The sequence spans 335 residues: Type 1 fimbrin D-mannose specific adhesin (335 aa).

Positions 1-22 (MKIYSALLLAGTALFFTHPALA) are cleaved as a signal peptide.

The protein belongs to the fimbrial protein family.

It localises to the fimbrium. In terms of biological role, involved in regulation of length and mediation of adhesion of type 1 fimbriae (but not necessary for the production of fimbriae). A mannose-binding adhesin. This chain is Type 1 fimbrin D-mannose specific adhesin (fimH), found in Salmonella typhimurium (strain LT2 / SGSC1412 / ATCC 700720).